Consider the following 283-residue polypeptide: MMTHWPSPAKLNLFLYITGQRADGYHTLQTLFQFLDYGDTLHIEPRHDGEIHLLTPVNGVENEDNLIVRAARLLMKVASESGRLPAGSGADISIEKRLPMGGGLGGGSSNAATVLVALNHLWQCGLSIDELATLGLTLGADVPVFVRGHAAFAEGVGEILTPVNPPEKWYLVAHPGVSIPTPVIFKDPQLPRNTPKRSIDTLLKCEFSNDCEVIARKRFREVDAALSWLLEYAPSRLTGTGACVFAEFDTESCARQVLEQAPEWLNAFVAKGVNLSPLHRELL.

Lys10 is an active-site residue. 99 to 109 (PMGGGLGGGSS) contacts ATP. Asp141 is a catalytic residue.

The protein belongs to the GHMP kinase family. IspE subfamily. As to quaternary structure, homodimer.

It catalyses the reaction 4-CDP-2-C-methyl-D-erythritol + ATP = 4-CDP-2-C-methyl-D-erythritol 2-phosphate + ADP + H(+). It functions in the pathway isoprenoid biosynthesis; isopentenyl diphosphate biosynthesis via DXP pathway; isopentenyl diphosphate from 1-deoxy-D-xylulose 5-phosphate: step 3/6. In terms of biological role, catalyzes the phosphorylation of the position 2 hydroxy group of 4-diphosphocytidyl-2C-methyl-D-erythritol. The sequence is that of 4-diphosphocytidyl-2-C-methyl-D-erythritol kinase (ispE) from Salmonella typhimurium (strain LT2 / SGSC1412 / ATCC 700720).